The chain runs to 236 residues: 5'-methylthioadenosine/S-adenosylhomocysteine nucleosidase (236 aa).

Glu-12 acts as the Proton acceptor in catalysis. Substrate is bound by residues Gly-78, Ile-153, and 174-175 (ME). The Proton donor role is filled by Asp-198.

This sequence belongs to the PNP/UDP phosphorylase family. MtnN subfamily.

The catalysed reaction is S-adenosyl-L-homocysteine + H2O = S-(5-deoxy-D-ribos-5-yl)-L-homocysteine + adenine. It catalyses the reaction S-methyl-5'-thioadenosine + H2O = 5-(methylsulfanyl)-D-ribose + adenine. It carries out the reaction 5'-deoxyadenosine + H2O = 5-deoxy-D-ribose + adenine. The protein operates within amino-acid biosynthesis; L-methionine biosynthesis via salvage pathway; S-methyl-5-thio-alpha-D-ribose 1-phosphate from S-methyl-5'-thioadenosine (hydrolase route): step 1/2. Functionally, catalyzes the irreversible cleavage of the glycosidic bond in both 5'-methylthioadenosine (MTA) and S-adenosylhomocysteine (SAH/AdoHcy) to adenine and the corresponding thioribose, 5'-methylthioribose and S-ribosylhomocysteine, respectively. Also cleaves 5'-deoxyadenosine, a toxic by-product of radical S-adenosylmethionine (SAM) enzymes, into 5-deoxyribose and adenine. This chain is 5'-methylthioadenosine/S-adenosylhomocysteine nucleosidase, found in Shewanella baltica (strain OS185).